The sequence spans 759 residues: Phosphoribosylformylglycinamidine synthase subunit PurL (759 aa).

His34 is an active-site residue. Tyr37 serves as a coordination point for ATP. Glu95 lines the Mg(2+) pocket. Substrate-binding positions include 96-99 (SHNH) and Arg118. His97 acts as the Proton acceptor in catalysis. Residue Asp119 participates in Mg(2+) binding. Gln243 contacts substrate. Residue Asp271 participates in Mg(2+) binding. 315–317 (ESQ) serves as a coordination point for substrate. Positions 388–422 (DGAPMNDLASESPTQPDRDLPDPEPSLDEAVESVV) are disordered. Asp520 and Gly557 together coordinate ATP. A Mg(2+)-binding site is contributed by Asn558. Ser560 provides a ligand contact to substrate.

Belongs to the FGAMS family. In terms of assembly, monomer. Part of the FGAM synthase complex composed of 1 PurL, 1 PurQ and 2 PurS subunits.

Its subcellular location is the cytoplasm. The enzyme catalyses N(2)-formyl-N(1)-(5-phospho-beta-D-ribosyl)glycinamide + L-glutamine + ATP + H2O = 2-formamido-N(1)-(5-O-phospho-beta-D-ribosyl)acetamidine + L-glutamate + ADP + phosphate + H(+). It functions in the pathway purine metabolism; IMP biosynthesis via de novo pathway; 5-amino-1-(5-phospho-D-ribosyl)imidazole from N(2)-formyl-N(1)-(5-phospho-D-ribosyl)glycinamide: step 1/2. Part of the phosphoribosylformylglycinamidine synthase complex involved in the purines biosynthetic pathway. Catalyzes the ATP-dependent conversion of formylglycinamide ribonucleotide (FGAR) and glutamine to yield formylglycinamidine ribonucleotide (FGAM) and glutamate. The FGAM synthase complex is composed of three subunits. PurQ produces an ammonia molecule by converting glutamine to glutamate. PurL transfers the ammonia molecule to FGAR to form FGAM in an ATP-dependent manner. PurS interacts with PurQ and PurL and is thought to assist in the transfer of the ammonia molecule from PurQ to PurL. The polypeptide is Phosphoribosylformylglycinamidine synthase subunit PurL (Halorubrum lacusprofundi (strain ATCC 49239 / DSM 5036 / JCM 8891 / ACAM 34)).